Here is an 855-residue protein sequence, read N- to C-terminus: MSQPYLKIAILVAATIVSAIPVWTTPVSTSPPQQTKLHYVGNGTWVHNNTFNVTRYDRITMEPVYNNNLSSTTFFVAISERNFRTVNTPLGASVFWILKSALNPPKHQPCIANVPEPGDPRGPCVNSTVSLFFNDNLEPFLMTKNLLEFEVLPDNYITGWTFERSKTVATKGNPVGVVLSPPRTSPDVNNTIRDDGTPKQHLSIIDEHTTFVLDLQNFTKTLTYISPFAAVWPITAFHAGITVMGCDTTQAIAYLGNGFMGLQISSVNNPPLEMIVAPNDVRARIVNRLPPRRRLEPPGPYAGPIYKVYVLSDGNFYLGHGMSKISREVAAYPEESLDYRYHLSLANLDTLAMLAELSSGKSKDVSYYLYRIIARLAVATFSLAEVIRLSDYMLLQEAIDVDINLRLIVPLVMKYAAGGTADSSYTSSDVAMDQFEVAQAQIEKIVADINIENELRKPMYEHRSLLKSVYAYSRKPLPNAVSFANRLITAMYKEAIKDRITWNSTMREVLFFAVGAAAGSHVILTDGPDLGLHAHKDSSMFLSLNRNILLLCTAMCTASHAVSAGVKLEEVMAGLIAGGVQFSLLEVFSPCMASARFDLAEEEHVLDLLSVIPPRLYTDLNTGLEDDGTTIHSYGRSANGILNSRIAYNFDAVRVFTPELASCSTKLPKVLVVLPLASNRSYVITRTAPNIGLTYSLDGVNIAKPIVISYITYGNCQVSRATIRSVYLDHPGHTQSCVYCGSVFMRYMASGAIMDLIYIDDKDVELQLVAGENSTIPAFNPKLYTPSMNALLMFPNGTVTLMSAFASYSAFKIPSTYLWASIGGLLLAILILYVIVKMLCGGVINNDYSLLLNSE.

Positions 1 to 19 (MSQPYLKIAILVAATIVSA) are cleaved as a signal peptide. At 20–815 (IPVWTTPVST…ASYSAFKIPS (796 aa)) the chain is on the virion surface side. Residues Asn42, Asn48, Asn52, Asn68, Asn126, Asn189, and Asn217 are each glycosylated (N-linked (GlcNAc...) asparagine; by host). Residues 174-195 (PVGVVLSPPRTSPDVNNTIRDD) are disordered. The tract at residues 247–310 (DTTQAIAYLG…YAGPIYKVYV (64 aa)) is interaction with gL. Asn503, Asn679, Asn773, and Asn796 each carry an N-linked (GlcNAc...) asparagine; by host glycan. Residues 816–836 (TYLWASIGGLLLAILILYVIV) form a helical membrane-spanning segment. Over 837 to 855 (KMLCGGVINNDYSLLLNSE) the chain is Intravirion.

It belongs to the herpesviridae glycoprotein H family. In terms of assembly, interacts with glycoprotein L (gL); this interaction is necessary for the correct processing and cell surface expression of gH. The heterodimer gH/gL seems to interact with gB trimers during fusion. N-glycosylated, O-glycosylated, and sialylated.

The protein localises to the virion membrane. The protein resides in the host cell membrane. Its subcellular location is the host endosome membrane. The heterodimer glycoprotein H-glycoprotein L is required for the fusion of viral and plasma membranes leading to virus entry into the host cell. Following initial binding to host receptor, membrane fusion is mediated by the fusion machinery composed of gB and the heterodimer gH/gL. May also be involved in the fusion between the virion envelope and the outer nuclear membrane during virion morphogenesis. This Equine herpesvirus 4 (strain 1942) (EHV-4) protein is Envelope glycoprotein H.